We begin with the raw amino-acid sequence, 1598 residues long: MESQQLHQNPHSLHGSAYASVTSKEVPSNQDPLAVSASNLPEFDRDSTKVNSQEETTPGTSAVPENHHHVSPQPASVPPPQNGQYQQHGMMTPNKAMASNWAHYQQPSMMTCSHYQTSPAYYQPDPHYPLPQYIPPLSTSSPDPIDSQDQHSEVPQAKTKVRNNVLPPHTLTSEENFSTWVKFYIRFLKNSNLGDIIPNDQGEIKRQMTYEEHAYIYNTFQAFAPFHLLPTWVKQILEINYSDILTVLCKSVSKMQTNNQELKDWIALANLEYNGSTSADTFEITVSTIIQRLKENNINVSDRLACQLILKGLSGDFKYLRNQYRTKTNMKLSQLFAEIQLIYDENKIMNLNKPSQYKQHSEYKNVSRTSPNTTNTKVTTRNYHRTNSSKPRAAKAHNIATSSKFSRVNNDHINESTVSSQYLSDDNELSLGQQQKESKPTRTIDSNDELPDHLLIDSGASQTLVRSAHYLHHATPNSEINIVDAQKQDIPINAIGNLHFNFQNGTKTSIKALHTPNIAYDLLSLSELANQNITACFTRNTLERSDGTVLAPIVKHGDFYWLSKKYLIPSHISKLTINNVNKSKSVNKYPYPLIHRMLGHANFRSIQKSLKKNAVTYLKESDIEWSNASTYQCPDCLIGKSTKHRHVKGSRLKYQESYEPFQYLHTDIFGPVHHLPKSAPSYFISFTDEKTRFQWVYPLHDRREESILNVFTSILAFIKNQFNARVLVIQMDRGSEYTNKTLHKFFTNRGITACYTTTADSRAHGVAERLNRTLLNDCRTLLHCSGLPNHLWFSAVEFSTIIRNSLVSPKNDKSARQHAGLAGLDITTILPFGQPVIVNNHNPDSKIHPRGIPGYALHPSRNSYGYIIYLPSLKKTVDTTNYVILQNKQTKLDQFDYDTLTFDDDLNRLTAHNQSFIEQNETEQSYDQNKESDHDYQSEIEINSDPLVNDFSSQSINPLQLDKEPVQKVRAPKEVDADISEYNILPSTIRSRTPHIINKESTEMGGTVESDTTSPRHSSTFTARNQNRPGSTNEMIDLTSQDRVNYGLENIKTTRLGGTEEPYIQRNSDTNIKYRTTNSTPSIDDRSSNSESTTPIISIETKAVCDNTPSIDTDPPEYRSSDHATPNIMPDKSSKNVTADSILDDLPLPDLTHKSPTDTSDVSKDIPHIHSRQTNSSLGGMDDSNVLTTTKSKKRSLEDNETEIEVSRDTWNNKNMRSLEPPRSKKRINLIAAIKGVKSIKPVRTTLRYDEAITYNKDNKEKDRYVEAYHKEISQLLKMNTWDTNKYYDRNDIDPKKVINSMFIFNKKRDGTHKARFVARSDIQHPDTYDSDMQSNTVHHYALMTSLSIALDNDYYITQLDISSAYLYADIKEELYIRPPPHLGLNDKLLRLRKSLYGLKQSGANWYETIKSYLINCCDMQEVRGWSCVFKNSQVTICLFVDDMILFSKDLNANKKIITTLKKQYDTKIINLGEGDNEIQYDILGLEIKYQRSKYMKLGMEKSLTEKLPKLNVPLNPKGKKLRAPGQPGHYIDQDELEINEEKFRNRFFGTKAMRLRDEVSGNNLYVYYIETKKNIADVMTKPLPIKTFKLLTNKWIH.

Polar residues-rich tracts occupy residues 1-11 (MESQQLHQNPH), 19-39 (ASVTSKEVPSNQDPLAVSASN), and 49-60 (KVNSQEETTPGT). Disordered stretches follow at residues 1–88 (MESQ…YQQH) and 359–449 (QHSE…SNDE). The interval 295-397 (ENNINVSDRL…SSKPRAAKAH (103 aa)) is RNA-binding. The segment covering 369–381 (TSPNTTNTKVTTR) has biased composition (low complexity). Composition is skewed to polar residues over residues 399–408 (IATSSKFSRV) and 415–435 (ESTVSSQYLSDDNELSLGQQQ). Asp-457 (for protease activity; shared with dimeric partner) is an active-site residue. Residues 579–636 (NVNKSKSVNKYPYPLIHRMLGHANFRSIQKSLKKNAVTYLKESDIEWSNASTYQCPDC) are integrase-type zinc finger-like. Residues 656–831 (ESYEPFQYLH…AGLDITTILP (176 aa)) form the Integrase catalytic domain. The Mg(2+) site is built by Asp-667 and Asp-732. Polar residues-rich tracts occupy residues 915–927 (SFIEQNETEQSYD), 1009–1034 (ESDTTSPRHSSTFTARNQNRPGSTNE), and 1065–1082 (QRNSDTNIKYRTTNSTPS). Disordered stretches follow at residues 915–934 (SFIEQNETEQSYDQNKESDH), 1004–1034 (MGGTVESDTTSPRHSSTFTARNQNRPGSTNE), 1059–1135 (TEEP…KSSK), 1146–1165 (LPLPDLTHKSPTDTSDVSKD), and 1170–1205 (HSRQTNSSLGGMDDSNVLTTTKSKKRSLEDNETEIE). Residues 1151–1165 (LTHKSPTDTSDVSKD) are compositionally biased toward basic and acidic residues. Positions 1193–1227 (KKRSLEDNETEIEVSRDTWNNKNMRSLEPPRSKKR) match the Bipartite nuclear localization signal motif. One can recognise a Reverse transcriptase Ty1/copia-type domain in the interval 1353 to 1491 (NDYYITQLDI…DILGLEIKYQ (139 aa)). Residues Asp-1361, Asp-1442, and Asp-1443 each coordinate Mg(2+).

The capsid protein forms a homotrimer, from which the VLPs are assembled. The protease is a homodimer, whose active site consists of two apposed aspartic acid residues. Post-translationally, initially, virus-like particles (VLPs) are composed of the structural unprocessed proteins Gag and Gag-Pol, and also contain the host initiator methionine tRNA (tRNA(i)-Met) which serves as a primer for minus-strand DNA synthesis, and a dimer of genomic Ty RNA. Processing of the polyproteins occurs within the particle and proceeds by an ordered pathway, called maturation. First, the protease (PR) is released by autocatalytic cleavage of the Gag-Pol polyprotein, and this cleavage is a prerequisite for subsequent processing at the remaining sites to release the mature structural and catalytic proteins. Maturation takes place prior to the RT reaction and is required to produce transposition-competent VLPs.

It localises to the cytoplasm. The protein localises to the nucleus. It catalyses the reaction DNA(n) + a 2'-deoxyribonucleoside 5'-triphosphate = DNA(n+1) + diphosphate. The catalysed reaction is Endonucleolytic cleavage to 5'-phosphomonoester.. Its function is as follows. Capsid protein (CA) is the structural component of the virus-like particle (VLP), forming the shell that encapsulates the retrotransposons dimeric RNA genome. The particles are assembled from trimer-clustered units and there are holes in the capsid shells that allow for the diffusion of macromolecules. CA also has nucleocapsid-like chaperone activity, promoting primer tRNA(i)-Met annealing to the multipartite primer-binding site (PBS), dimerization of Ty2 RNA and initiation of reverse transcription. In terms of biological role, the aspartyl protease (PR) mediates the proteolytic cleavages of the Gag and Gag-Pol polyproteins after assembly of the VLP. Functionally, reverse transcriptase/ribonuclease H (RT) is a multifunctional enzyme that catalyzes the conversion of the retro-elements RNA genome into dsDNA within the VLP. The enzyme displays a DNA polymerase activity that can copy either DNA or RNA templates, and a ribonuclease H (RNase H) activity that cleaves the RNA strand of RNA-DNA heteroduplexes during plus-strand synthesis and hydrolyzes RNA primers. The conversion leads to a linear dsDNA copy of the retrotransposon that includes long terminal repeats (LTRs) at both ends. Integrase (IN) targets the VLP to the nucleus, where a subparticle preintegration complex (PIC) containing at least integrase and the newly synthesized dsDNA copy of the retrotransposon must transit the nuclear membrane. Once in the nucleus, integrase performs the integration of the dsDNA into the host genome. The protein is Transposon Ty2-LR2 Gag-Pol polyprotein (TY2B-LR2) of Saccharomyces cerevisiae (strain ATCC 204508 / S288c) (Baker's yeast).